Here is a 64-residue protein sequence, read N- to C-terminus: Large ribosomal subunit protein bL33 (64 aa).

Basic and acidic residues-rich tracts occupy residues 16-25 (EARTSSDPKR) and 33-42 (TTEKNRRNTT). The tract at residues 16–42 (EARTSSDPKRSNGVSRYTTEKNRRNTT) is disordered.

The protein belongs to the bacterial ribosomal protein bL33 family.

In Prochlorococcus marinus (strain MIT 9301), this protein is Large ribosomal subunit protein bL33.